The following is a 502-amino-acid chain: Nondiscriminating glutamyl-tRNA synthetase EARS2, mitochondrial (502 aa).

The N-terminal 20 residues, 1-20 (MAGMLREVCGAAASGLRVRF), are a transit peptide targeting the mitochondrion. L-glutamate is bound at residue 19 to 21 (RFG). A 'HIGH' region motif is present at residues 24–32 (PTGFLHLGG). Residue His-29 participates in ATP binding. L-glutamate is bound by residues Glu-55, 207 to 211 (YHLAN), and Arg-225. Residues Glu-228 and 263 to 267 (KLSKR) each bind ATP. The short motif at 263–267 (KLSKR) is the 'KMSKS' region element.

This sequence belongs to the class-I aminoacyl-tRNA synthetase family. Glutamate--tRNA ligase type 1 subfamily.

It localises to the mitochondrion matrix. The catalysed reaction is tRNA(Glx) + L-glutamate + ATP = L-glutamyl-tRNA(Glx) + AMP + diphosphate. It carries out the reaction tRNA(Glu) + L-glutamate + ATP = L-glutamyl-tRNA(Glu) + AMP + diphosphate. It catalyses the reaction tRNA(Gln) + L-glutamate + ATP = L-glutamyl-tRNA(Gln) + AMP + diphosphate. Non-discriminating glutamyl-tRNA synthetase that catalyzes aminoacylation of both mitochondrial tRNA(Glu) and tRNA(Gln) and participates in RNA aminoacylation for mitochondrial protein translation. Attachs glutamate to tRNA(Glu) or tRNA(Gln) in a two-step reaction: glutamate is first activated by ATP to form Glu-AMP and then transferred to the acceptor end of tRNA(Glu) or tRNA(Gln). The protein is Nondiscriminating glutamyl-tRNA synthetase EARS2, mitochondrial of Gallus gallus (Chicken).